The primary structure comprises 232 residues: LOB domain-containing protein 11 (232 aa).

The segment at 1–50 (MLKMEINGGVATPTASAVAKVTETTTPVNSPSPTSSPPPPPSPQQPPQPP) is disordered. Positions 34-50 (TSSPPPPPSPQQPPQPP) are enriched in pro residues. Residues 54–155 (SPCAACKILR…AQLAKTQVEL (102 aa)) enclose the LOB domain. Positions 181–218 (EQGQQKMSFESSFESGDEFISSPDEESNDLGFLEDNNN) are disordered. Low complexity predominate over residues 188 to 202 (SFESSFESGDEFISS).

This sequence belongs to the LOB domain-containing protein family. In terms of tissue distribution, expressed in young shoots, stems, leaves and flowers.

The chain is LOB domain-containing protein 11 (LBD11) from Arabidopsis thaliana (Mouse-ear cress).